Reading from the N-terminus, the 427-residue chain is Tol-Pal system protein TolB (427 aa).

An N-terminal signal peptide occupies residues 1-25; sequence MKTFAQLRLLLAAAALALLSFSAQA.

Belongs to the TolB family. As to quaternary structure, the Tol-Pal system is composed of five core proteins: the inner membrane proteins TolA, TolQ and TolR, the periplasmic protein TolB and the outer membrane protein Pal. They form a network linking the inner and outer membranes and the peptidoglycan layer.

It localises to the periplasm. Its function is as follows. Part of the Tol-Pal system, which plays a role in outer membrane invagination during cell division and is important for maintaining outer membrane integrity. The polypeptide is Tol-Pal system protein TolB (Azoarcus sp. (strain BH72)).